A 151-amino-acid polypeptide reads, in one-letter code: Large ribosomal subunit protein uL22 (151 aa).

Belongs to the universal ribosomal protein uL22 family. In terms of assembly, part of the 50S ribosomal subunit.

This protein binds specifically to 23S rRNA. It makes multiple contacts with different domains of the 23S rRNA in the assembled 50S subunit and ribosome. Its function is as follows. The globular domain of the protein is located near the polypeptide exit tunnel on the outside of the subunit, while an extended beta-hairpin is found that lines the wall of the exit tunnel in the center of the 70S ribosome. The sequence is that of Large ribosomal subunit protein uL22 from Thermofilum pendens (strain DSM 2475 / Hrk 5).